Here is a 441-residue protein sequence, read N- to C-terminus: Ribulose bisphosphate carboxylase large chain (441 aa).

N6,N6,N6-trimethyllysine is present on Lys5. Substrate contacts are provided by Asn114 and Thr164. Lys166 (proton acceptor) is an active-site residue. Lys168 serves as a coordination point for substrate. Mg(2+) contacts are provided by Lys192, Asp194, and Glu195. Lys192 bears the N6-carboxylysine mark. His285 serves as the catalytic Proton acceptor. 3 residues coordinate substrate: Arg286, His318, and Ser370.

It belongs to the RuBisCO large chain family. Type I subfamily. As to quaternary structure, heterohexadecamer of 8 large chains and 8 small chains; disulfide-linked. The disulfide link is formed within the large subunit homodimers. Mg(2+) is required as a cofactor. Post-translationally, the disulfide bond which can form in the large chain dimeric partners within the hexadecamer appears to be associated with oxidative stress and protein turnover.

The protein resides in the plastid. The protein localises to the chloroplast. The enzyme catalyses 2 (2R)-3-phosphoglycerate + 2 H(+) = D-ribulose 1,5-bisphosphate + CO2 + H2O. It catalyses the reaction D-ribulose 1,5-bisphosphate + O2 = 2-phosphoglycolate + (2R)-3-phosphoglycerate + 2 H(+). RuBisCO catalyzes two reactions: the carboxylation of D-ribulose 1,5-bisphosphate, the primary event in carbon dioxide fixation, as well as the oxidative fragmentation of the pentose substrate in the photorespiration process. Both reactions occur simultaneously and in competition at the same active site. This is Ribulose bisphosphate carboxylase large chain from Glycyrrhiza echinata (Licorice).